We begin with the raw amino-acid sequence, 802 residues long: Lon protease (802 aa).

The Lon N-terminal domain maps to 17-209; the sequence is LPILPLNNVV…QVLSFLERER (193 aa). Residue 363-370 coordinates ATP; the sequence is GPPGVGKT. A Lon proteolytic domain is found at 599–780; the sequence is EDEVGVVTGL…DEVLPRVLHP (182 aa). Catalysis depends on residues S686 and K729.

Belongs to the peptidase S16 family. Homohexamer. Organized in a ring with a central cavity.

The protein resides in the cytoplasm. The catalysed reaction is Hydrolysis of proteins in presence of ATP.. Its function is as follows. ATP-dependent serine protease that mediates the selective degradation of mutant and abnormal proteins as well as certain short-lived regulatory proteins. Required for cellular homeostasis and for survival from DNA damage and developmental changes induced by stress. Degrades polypeptides processively to yield small peptide fragments that are 5 to 10 amino acids long. Binds to DNA in a double-stranded, site-specific manner. The polypeptide is Lon protease (Roseiflexus castenholzii (strain DSM 13941 / HLO8)).